Here is a 133-residue protein sequence, read N- to C-terminus: Small ribosomal subunit protein mS23 (133 aa).

This sequence belongs to the mitochondrion-specific ribosomal protein mS23 family. Component of the mitochondrial ribosome small subunit (28S) which comprises a 12S rRNA and about 30 distinct proteins.

Its subcellular location is the mitochondrion. The polypeptide is Small ribosomal subunit protein mS23 (mrps-23) (Caenorhabditis elegans).